We begin with the raw amino-acid sequence, 159 residues long: Prs ADP-ribosylating antitoxin (159 aa).

A sufficient to neutralize toxin region spans residues 99–159 (EDMVEESGET…LAQIQSGAFA (61 aa)).

This sequence belongs to the MbcA/ParS/Xre antitoxin family. In terms of assembly, forms heterotetrameric ParS(2)-ParT(2) complexes. The 2 antitoxin fragments do not make contact in the crystal structure.

Its function is as follows. Antitoxin component of a type II toxin-antitoxin (TA) system. Neutralizes the bacteriostatic effect of cognate toxin ParT by inserting into its active site. The protein is Prs ADP-ribosylating antitoxin of Sphingobium sp. (strain YBL2).